The following is a 334-amino-acid chain: Heat-inducible transcription repressor HrcA (334 aa).

The protein belongs to the HrcA family.

In terms of biological role, negative regulator of class I heat shock genes (grpE-dnaK-dnaJ and groELS operons). Prevents heat-shock induction of these operons. This chain is Heat-inducible transcription repressor HrcA, found in Acidovorax ebreus (strain TPSY) (Diaphorobacter sp. (strain TPSY)).